The sequence spans 463 residues: Fumarate hydratase class II (463 aa).

Substrate is bound by residues 98–100, 129–132, 139–141, and T187; these read SGT, HPND, and SSN. H188 serves as the catalytic Proton donor/acceptor. Residue S318 is part of the active site. Substrate contacts are provided by residues S319 and 324 to 326; that span reads KVN.

This sequence belongs to the class-II fumarase/aspartase family. Fumarase subfamily. Homotetramer.

The protein resides in the cytoplasm. It carries out the reaction (S)-malate = fumarate + H2O. It functions in the pathway carbohydrate metabolism; tricarboxylic acid cycle; (S)-malate from fumarate: step 1/1. Involved in the TCA cycle. Catalyzes the stereospecific interconversion of fumarate to L-malate. The sequence is that of Fumarate hydratase class II from Brucella melitensis biotype 1 (strain ATCC 23456 / CCUG 17765 / NCTC 10094 / 16M).